The sequence spans 405 residues: Plasma serine protease inhibitor (405 aa).

A signal peptide spans methionine 1–serine 19. The propeptide at arginine 20–histidine 24 is removed in mature form. The N-linked (GlcNAc...) asparagine glycan is linked to asparagine 247.

The protein belongs to the serpin family. As to quaternary structure, forms protease inhibiting heterodimers in extracellular body fluids with serine proteases such as activated protein C/coagulation factor V/F5, acrosin/ACR, chymotrypsinogen B/CTRB1, prothrombin/F2, factor Xa/F10, factor XI/F11, kallikrein/KLKB1, tissue kallikrein, trypsin/PRSS1, prostate specific antigen/KLK3, tissue plasminogen activator/PLAT and urinary plasminogen activator/PLAU. Forms membrane-anchored serine proteases inhibiting heterodimers with TMPRSS7 and TMPRSS11E. Interacts with SEMG2. In terms of processing, N-glycosylated; glycans consist of a mixture of sialylated bi- (including sialyl-Lewis X epitopes), tri- and tetra-antennary complex-type chains; affects the maximal heparin- and thrombomodulin-enhanced rates of thrombin inhibition. O-glycosylated; further modified with 2 sialic acid residues. Proteolytically cleaved at the N-terminus; inhibits slightly the heparin- and thrombomodulin-enhanced rates of thrombin inhibition. Post-translationally, proteolytically cleaved. Inhibition of proteases is accompanied by formation of a stable enzyme-inhibitor complex and by degradation of the serpin to lower molecular weight derivatives. As to expression, not detected in blood plasma (at protein level). Expressed in testis, epididymis, seminal vesicles, prostate and ovaries.

Its subcellular location is the secreted. The protein resides in the extracellular space. Its inhibitory activity is greatly enhanced in the presence of glycosaminoglycans, heparin, thrombomodulin and phospholipids vesicles. Its function is as follows. Heparin-dependent serine protease inhibitor acting in body fluids and secretions. Inactivates serine proteases by binding irreversibly to their serine activation site. Involved in the regulation of intravascular and extravascular proteolytic activities. Plays hemostatic roles in the blood plasma. Acts as a procoagulant and pro-inflammatory factor by inhibiting the anticoagulant activated protein C factor as well as the generation of activated protein C factor by the thrombin/thrombomodulin complex. Acts as an anticoagulant factor by inhibiting blood coagulation factors like prothrombin, factor XI, factor Xa, plasma kallikrein and fibrinolytic enzymes such as tissue- and urinary-type plasminogen activators. In seminal plasma, inactivates several serine proteases implicated in the reproductive system. Inhibits the serpin acrosin; indirectly protects component of the male genital tract from being degraded by excessive released acrosin. Inhibits tissue- and urinary-type plasminogen activator, prostate-specific antigen and kallikrein activities; has a control on the sperm motility and fertilization. Inhibits the activated protein C-catalyzed degradation of SEMG1 and SEMG2; regulates the degradation of semenogelin during the process of transfer of spermatozoa from the male reproductive tract into the female tract. In urine, inhibits urinary-type plasminogen activator and kallikrein activities. Inactivates membrane-anchored serine proteases activities such as MPRSS7 and TMPRSS11E. Inhibits urinary-type plasminogen activator-dependent tumor cell invasion and metastasis. May also play a non-inhibitory role in seminal plasma and urine as a hydrophobic hormone carrier by its binding to retinoic acid. The polypeptide is Plasma serine protease inhibitor (Serpina5) (Mus musculus (Mouse)).